A 151-amino-acid polypeptide reads, in one-letter code: Large ribosomal subunit protein bL9 (151 aa).

It belongs to the bacterial ribosomal protein bL9 family.

In terms of biological role, binds to the 23S rRNA. This is Large ribosomal subunit protein bL9 from Nitrosococcus oceani (strain ATCC 19707 / BCRC 17464 / JCM 30415 / NCIMB 11848 / C-107).